Consider the following 216-residue polypeptide: Redox-sensing transcriptional repressor Rex (216 aa).

A DNA-binding region (H-T-H motif) is located at residues 20–59; that stretch reads QYYRLFKSLVEENVTRTNSQLISEKIGVDAATIRRDFSLF. NAD(+) is bound at residue 94–99; sequence GVGNLG.

The protein belongs to the transcriptional regulatory Rex family. As to quaternary structure, homodimer.

Its subcellular location is the cytoplasm. In terms of biological role, modulates transcription in response to changes in cellular NADH/NAD(+) redox state. This chain is Redox-sensing transcriptional repressor Rex, found in Lactococcus lactis subsp. cremoris (strain SK11).